A 343-amino-acid polypeptide reads, in one-letter code: Methionine import ATP-binding protein MetN (343 aa).

An ABC transporter domain is found at 2-241 (ITLSHITKQF…PKTPLAQAFI (240 aa)). 38–45 (GASGAGKS) contacts ATP.

Belongs to the ABC transporter superfamily. Methionine importer (TC 3.A.1.24) family. In terms of assembly, the complex is composed of two ATP-binding proteins (MetN), two transmembrane proteins (MetI) and a solute-binding protein (MetQ).

The protein resides in the cell inner membrane. It catalyses the reaction L-methionine(out) + ATP + H2O = L-methionine(in) + ADP + phosphate + H(+). The enzyme catalyses D-methionine(out) + ATP + H2O = D-methionine(in) + ADP + phosphate + H(+). Its function is as follows. Part of the ABC transporter complex MetNIQ involved in methionine import. Responsible for energy coupling to the transport system. The sequence is that of Methionine import ATP-binding protein MetN from Sodalis glossinidius (strain morsitans).